The following is a 283-amino-acid chain: uncharacterized protein (283 aa).

Positions 1 to 10 (MEVNKTTESL) are enriched in polar residues. 2 disordered regions span residues 1 to 96 (MEVN…SGGN) and 255 to 283 (DQEGDQEGEGRQEQHQGRQQEKKLEEAQI). Composition is skewed to basic and acidic residues over residues 14–34 (KVEHNHAQAESHEPRDQRDVK) and 44–81 (SKQEKLDHGSGRTSSRHETSRSSKEGSIEDKSAEVSSR).

Belongs to the chlamydial CPn_0705/CT_671/TC_0042 family.

This is an uncharacterized protein from Chlamydia muridarum (strain MoPn / Nigg).